The sequence spans 355 residues: 3-dehydroquinate synthase (355 aa).

Residues 71-76, 105-109, 129-130, Lys142, Lys151, and 169-172 each bind NAD(+); these read EGEASK, GVVGD, TS, and TLNT. Zn(2+) is bound by residues Glu184, His246, and His263.

It belongs to the sugar phosphate cyclases superfamily. Dehydroquinate synthase family. NAD(+) serves as cofactor. It depends on Co(2+) as a cofactor. Requires Zn(2+) as cofactor.

The protein localises to the cytoplasm. It carries out the reaction 7-phospho-2-dehydro-3-deoxy-D-arabino-heptonate = 3-dehydroquinate + phosphate. It participates in metabolic intermediate biosynthesis; chorismate biosynthesis; chorismate from D-erythrose 4-phosphate and phosphoenolpyruvate: step 2/7. Catalyzes the conversion of 3-deoxy-D-arabino-heptulosonate 7-phosphate (DAHP) to dehydroquinate (DHQ). This Streptococcus mutans serotype c (strain ATCC 700610 / UA159) protein is 3-dehydroquinate synthase.